We begin with the raw amino-acid sequence, 347 residues long: Quinolinate synthase (347 aa).

Iminosuccinate is bound by residues histidine 47 and serine 68. Cysteine 113 is a [4Fe-4S] cluster binding site. Residues 139–141 and serine 156 each bind iminosuccinate; that span reads YAN. Position 200 (cysteine 200) interacts with [4Fe-4S] cluster. Residues 226–228 and threonine 243 each bind iminosuccinate; that span reads HPE. [4Fe-4S] cluster is bound at residue cysteine 297.

This sequence belongs to the quinolinate synthase family. Type 1 subfamily. Requires [4Fe-4S] cluster as cofactor.

It localises to the cytoplasm. The catalysed reaction is iminosuccinate + dihydroxyacetone phosphate = quinolinate + phosphate + 2 H2O + H(+). Its pathway is cofactor biosynthesis; NAD(+) biosynthesis; quinolinate from iminoaspartate: step 1/1. Functionally, catalyzes the condensation of iminoaspartate with dihydroxyacetone phosphate to form quinolinate. The chain is Quinolinate synthase from Escherichia fergusonii (strain ATCC 35469 / DSM 13698 / CCUG 18766 / IAM 14443 / JCM 21226 / LMG 7866 / NBRC 102419 / NCTC 12128 / CDC 0568-73).